A 265-amino-acid polypeptide reads, in one-letter code: Probable esterase tazC (265 aa).

Residues Ser119, Asp209, and His236 each act as charge relay system in the active site.

It belongs to the LovG family.

The protein operates within secondary metabolite biosynthesis. Probable esterase; part of the gene cluster that mediates the biosynthesis of azaterrilone A and other azaphilones, a class of fungal metabolites characterized by a highly oxygenated pyrano-quinone bicyclic core and exhibiting a broad range of bioactivities. The first step of the pathway begins with the non-reducing polyketide synthase tazA that assembles one acetyl-CoA starter unit, five malonyl-CoA units, and catalyzes a series of Claisen condensations, methylation, PT-mediated cyclization, and finally releases the first hexaketide precursor through the R-domain. The tazA product then undergoes reduction on its terminal ketone and the following pyran-ring formation by yet undetermined enzyme(s). Dehydration and enoyl reduction, possibly involving the trans-enoyl reductase tazE leads to the next intermediate. TazD is predicted as an acetyltransferase and might catalyze the acetylation steps leading to the synthesis of azaterrilone A. Azaterrilone A is not the final product of the taz pathway and both the highly reducing polyketide synthase tazB and the dual enzyme tazHJ catalyze late steps of the pathway, leading to the production of the 2 final stereoisomers that contain additional polyketide modification whose structures have still to be determined. The polypeptide is Probable esterase tazC (Aspergillus terreus (strain NIH 2624 / FGSC A1156)).